The following is a 436-amino-acid chain: GTPase Der (436 aa).

2 consecutive EngA-type G domains span residues 4-167 (PVVA…PEVE) and 174-350 (VRVA…EQRT). Residues 10–17 (GRPNVGKS), 57–61 (DTGGL), 120–123 (NKVD), 180–187 (GRPNVGKS), 227–231 (DTAGL), and 292–295 (NKWD) contribute to the GTP site. Residues 351–435 (RRISTSEVND…PLRIILRRKN (85 aa)) form the KH-like domain.

It belongs to the TRAFAC class TrmE-Era-EngA-EngB-Septin-like GTPase superfamily. EngA (Der) GTPase family. In terms of assembly, associates with the 50S ribosomal subunit.

In terms of biological role, GTPase that plays an essential role in the late steps of ribosome biogenesis. This is GTPase Der from Gemmatimonas aurantiaca (strain DSM 14586 / JCM 11422 / NBRC 100505 / T-27).